Reading from the N-terminus, the 413-residue chain is Histidinol-phosphate aminotransferase, chloroplastic (413 aa).

Residues 1 to 35 (MGVIELCNTSSICIGRANPSCCSIERNQRRRIICM) constitute a chloroplast transit peptide. Lys-273 is subject to N6-(pyridoxal phosphate)lysine.

This sequence belongs to the class-II pyridoxal-phosphate-dependent aminotransferase family. Histidinol-phosphate aminotransferase subfamily. As to quaternary structure, homodimer. The cofactor is pyridoxal 5'-phosphate. In terms of tissue distribution, expressed in flowers, leaves, stems and roots.

It localises to the plastid. Its subcellular location is the chloroplast. The catalysed reaction is L-histidinol phosphate + 2-oxoglutarate = 3-(imidazol-4-yl)-2-oxopropyl phosphate + L-glutamate. Its pathway is amino-acid biosynthesis; L-histidine biosynthesis; L-histidine from 5-phospho-alpha-D-ribose 1-diphosphate: step 7/9. The polypeptide is Histidinol-phosphate aminotransferase, chloroplastic (HPA) (Nicotiana plumbaginifolia (Leadwort-leaved tobacco)).